We begin with the raw amino-acid sequence, 333 residues long: Foldase protein PrsA (333 aa).

The first 22 residues, 1-22 (MKKSTKLLAGIVTLASAMTLAA), serve as a signal peptide directing secretion. C23 carries the N-palmitoyl cysteine lipid modification. The S-diacylglycerol cysteine moiety is linked to residue C23. Residues 145-240 (TPEMTTQVTT…NKFYIVKVTK (96 aa)) enclose the PpiC domain. Positions 301-333 (DKKASKANTSKSDQKSSSDSSKDSQSSKSKSEK) are disordered. Residues 312 to 322 (SDQKSSSDSSK) are compositionally biased toward basic and acidic residues. The segment covering 323 to 333 (DSQSSKSKSEK) has biased composition (low complexity).

The protein belongs to the PrsA family.

It is found in the cell membrane. The enzyme catalyses [protein]-peptidylproline (omega=180) = [protein]-peptidylproline (omega=0). In terms of biological role, plays a major role in protein secretion by helping the post-translocational extracellular folding of several secreted proteins. The protein is Foldase protein PrsA of Streptococcus equi subsp. equi (strain 4047).